Here is a 136-residue protein sequence, read N- to C-terminus: Nucleoside diphosphate kinase (136 aa).

Lys10, Phe58, Arg86, Thr92, Arg104, and Asn114 together coordinate ATP. The Pros-phosphohistidine intermediate role is filled by His117.

The protein belongs to the NDK family. As to quaternary structure, homotetramer. Mg(2+) serves as cofactor.

It localises to the cytoplasm. The catalysed reaction is a 2'-deoxyribonucleoside 5'-diphosphate + ATP = a 2'-deoxyribonucleoside 5'-triphosphate + ADP. The enzyme catalyses a ribonucleoside 5'-diphosphate + ATP = a ribonucleoside 5'-triphosphate + ADP. Functionally, major role in the synthesis of nucleoside triphosphates other than ATP. The ATP gamma phosphate is transferred to the NDP beta phosphate via a ping-pong mechanism, using a phosphorylated active-site intermediate. This chain is Nucleoside diphosphate kinase, found in Mycobacterium avium (strain 104).